The following is a 344-amino-acid chain: 2,3,4,5-tetrahydropyridine-2,6-dicarboxylate N-succinyltransferase (344 aa).

Glu-205 is a binding site for Mg(2+). Residue Glu-221 is the Acyl-anhydride intermediate of the active site. Succinyl-CoA contacts are provided by residues Arg-223, Gly-238, Ser-241, Ala-264, 279–280, Gly-287, Lys-304, and 317–320; these read EA and RRNS.

The protein belongs to the type 2 tetrahydrodipicolinate N-succinyltransferase family. Homotrimer.

The protein resides in the cytoplasm. The enzyme catalyses (S)-2,3,4,5-tetrahydrodipicolinate + succinyl-CoA + H2O = (S)-2-succinylamino-6-oxoheptanedioate + CoA. The protein operates within amino-acid biosynthesis; L-lysine biosynthesis via DAP pathway; LL-2,6-diaminopimelate from (S)-tetrahydrodipicolinate (succinylase route): step 1/3. Catalyzes the conversion of the cyclic tetrahydrodipicolinate (THDP) into the acyclic N-succinyl-L-2-amino-6-oxopimelate using succinyl-CoA. This Pseudomonas paraeruginosa (strain DSM 24068 / PA7) (Pseudomonas aeruginosa (strain PA7)) protein is 2,3,4,5-tetrahydropyridine-2,6-dicarboxylate N-succinyltransferase.